A 66-amino-acid chain; its full sequence is Large ribosomal subunit protein bL33c (66 aa).

Belongs to the bacterial ribosomal protein bL33 family.

The protein localises to the plastid. Its subcellular location is the chloroplast. The chain is Large ribosomal subunit protein bL33c from Nandina domestica (Heavenly bamboo).